The sequence spans 233 residues: N-(5'-phosphoribosyl)anthranilate isomerase (233 aa).

The protein belongs to the TrpF family.

It carries out the reaction N-(5-phospho-beta-D-ribosyl)anthranilate = 1-(2-carboxyphenylamino)-1-deoxy-D-ribulose 5-phosphate. It functions in the pathway amino-acid biosynthesis; L-tryptophan biosynthesis; L-tryptophan from chorismate: step 3/5. The sequence is that of N-(5'-phosphoribosyl)anthranilate isomerase from Synechococcus sp. (strain JA-2-3B'a(2-13)) (Cyanobacteria bacterium Yellowstone B-Prime).